Here is a 244-residue protein sequence, read N- to C-terminus: 5-oxoprolinase subunit A (244 aa).

The protein belongs to the LamB/PxpA family. Forms a complex composed of PxpA, PxpB and PxpC.

The enzyme catalyses 5-oxo-L-proline + ATP + 2 H2O = L-glutamate + ADP + phosphate + H(+). In terms of biological role, catalyzes the cleavage of 5-oxoproline to form L-glutamate coupled to the hydrolysis of ATP to ADP and inorganic phosphate. This chain is 5-oxoprolinase subunit A, found in Salmonella paratyphi C (strain RKS4594).